A 191-amino-acid polypeptide reads, in one-letter code: Phosphoheptose isomerase (191 aa).

Positions 37 to 191 constitute an SIS domain; sequence IAESFKQDGK…IIQLIEKEME (155 aa). Substrate is bound at residue 52–54; that stretch reads NGG. Zn(2+) contacts are provided by histidine 61 and glutamate 65. Residues glutamate 65, 93–94, 119–121, serine 124, and glutamine 172 contribute to the substrate site; these read ND and STS. The Zn(2+) site is built by glutamine 172 and histidine 180.

The protein belongs to the SIS family. GmhA subfamily. Homotetramer. The cofactor is Zn(2+).

It is found in the cytoplasm. The enzyme catalyses 2 D-sedoheptulose 7-phosphate = D-glycero-alpha-D-manno-heptose 7-phosphate + D-glycero-beta-D-manno-heptose 7-phosphate. The protein operates within carbohydrate biosynthesis; D-glycero-D-manno-heptose 7-phosphate biosynthesis; D-glycero-alpha-D-manno-heptose 7-phosphate and D-glycero-beta-D-manno-heptose 7-phosphate from sedoheptulose 7-phosphate: step 1/1. It functions in the pathway bacterial outer membrane biogenesis; LPS core biosynthesis. Functionally, catalyzes the isomerization of sedoheptulose 7-phosphate in D-glycero-D-manno-heptose 7-phosphate. The sequence is that of Phosphoheptose isomerase from Vibrio vulnificus (strain CMCP6).